Reading from the N-terminus, the 259-residue chain is Zinc import ATP-binding protein ZnuC (259 aa).

The ABC transporter domain maps to 6–223 (VTVQSVSVTL…PAYHELFGPG (218 aa)). 38–45 (GPNGAGKS) is a binding site for ATP. Positions 230–259 (ALYTHDHDHDHDLHGNATHSHDHNGPCNHD) are disordered. Residues 233 to 259 (THDHDHDHDLHGNATHSHDHNGPCNHD) are compositionally biased toward basic and acidic residues.

It belongs to the ABC transporter superfamily. Zinc importer (TC 3.A.1.15.5) family. In terms of assembly, the complex is composed of two ATP-binding proteins (ZnuC), two transmembrane proteins (ZnuB) and a solute-binding protein (ZnuA).

It is found in the cell inner membrane. It carries out the reaction Zn(2+)(out) + ATP(in) + H2O(in) = Zn(2+)(in) + ADP(in) + phosphate(in) + H(+)(in). Functionally, part of the ABC transporter complex ZnuABC involved in zinc import. Responsible for energy coupling to the transport system. This Alcanivorax borkumensis (strain ATCC 700651 / DSM 11573 / NCIMB 13689 / SK2) protein is Zinc import ATP-binding protein ZnuC.